Here is a 147-residue protein sequence, read N- to C-terminus: Ubiquitin-conjugating enzyme E2-16 kDa (147 aa).

The UBC core domain occupies 1–147 (MAFKRINKEL…AREWTRKYAI (147 aa)). Cys-107 functions as the Glycyl thioester intermediate in the catalytic mechanism.

The protein belongs to the ubiquitin-conjugating enzyme family.

The catalysed reaction is S-ubiquitinyl-[E1 ubiquitin-activating enzyme]-L-cysteine + [E2 ubiquitin-conjugating enzyme]-L-cysteine = [E1 ubiquitin-activating enzyme]-L-cysteine + S-ubiquitinyl-[E2 ubiquitin-conjugating enzyme]-L-cysteine.. Its pathway is protein modification; protein ubiquitination. Functionally, catalyzes the covalent attachment of ubiquitin to other proteins. May also mediate selective proteolysis pathways. The chain is Ubiquitin-conjugating enzyme E2-16 kDa (UBC1) from Colletotrichum gloeosporioides (Anthracnose fungus).